The following is a 374-amino-acid chain: MGSKVSVEESVRVVIVGGGFAGIAAATQLKSFGIPFVLVDLKDAFHHNVAALRASVESGFARKTFISYKDTFQDNFIQGKVVGINLQTQRVILESNEELQFSHLIIATGSNGPFPGKINNVISKDQAIQVYEDLVKEIQKAKHVVVVGGGSAGVEMAAEVKTDYPEKEVTLVHSKVALADVQLQPKVRRTVKEILLSKGVRLILAQKVTNLDQVTSNVAQENTVLQLDKNSEVVTCDLVLCCTGYKISSSSYSSAFGDKLAEDGALIVNDYLQVQGHANVYAVGDCAYINEPKMAYYAGIHARVAATNVRNSLIGKSLKTYKPGALSMLLSMGRNDGVGQFNGCYLGRFFVTMAKSRDIFVSKSWKEMGQTMPR.

Gly-2 is lipidated: N-myristoyl glycine. The chain crosses the membrane as a helical span at residues 13–35; that stretch reads VVIVGGGFAGIAAATQLKSFGIP. Residues 17-21, Arg-53, and Val-81 each bind 6-hydroxy-FAD; that span reads GGGFA. Lys-167 carries the N6-acetyllysine modification. Asp-285 serves as a coordination point for 6-hydroxy-FAD.

Belongs to the FAD-dependent oxidoreductase family. It depends on 6-hydroxy-FAD as a cofactor. Post-translationally, N-myristoylation at Gly-2 mediates the recruitment to lipid droplets and plasma membrane. In terms of processing, acetylation at Lys-167 prevents AIFM2 ubiquitination and degradation, thereby inhibiting ferroptosis. KAT2B mediates acetylation at Lys-167, while HDAC3 removes it. Ubiquitinated. AIFM2 undergoes 'Lys-29'-ubiquitination and proteasomal degradation, which is inhibited by acetylation at Lys-167.

It is found in the lipid droplet. The protein resides in the cell membrane. The protein localises to the cytoplasm. Its subcellular location is the mitochondrion membrane. It localises to the nucleus. The catalysed reaction is ubiquinone-10 + NADH + H(+) = ubiquinol-10 + NAD(+). The enzyme catalyses phylloquinone + NADH + H(+) = phylloquinol + NAD(+). It catalyses the reaction menaquinone-4 + NADH + H(+) = menaquinol-4 + NAD(+). It carries out the reaction menadione + NADH + H(+) = menadiol + NAD(+). The modification by 4-hydroxy-2-nonenal (HNE) adduction in mitochondria results in loss of the oxidoreductase activity and activation of a novel function in mitochondrial oxidative stress signaling. Its function is as follows. An NAD(P)H-dependent oxidoreductase that acts as a key inhibitor of ferroptosis. At the plasma membrane, catalyzes reduction of coenzyme Q/ubiquinone-10 to ubiquinol-10, a lipophilic radical-trapping antioxidant that prevents lipid oxidative damage and consequently ferroptosis. Acts in parallel to GPX4 to suppress phospholipid peroxidation and ferroptosis. This anti-ferroptotic function is independent of cellular glutathione levels. Also acts as a potent radical-trapping antioxidant by mediating warfarin-resistant vitamin K reduction in the canonical vitamin K cycle: catalyzes NAD(P)H-dependent reduction of vitamin K (phylloquinone, menaquinone-4 and menadione) to hydroquinone forms. Hydroquinones act as potent radical-trapping antioxidants inhibitor of phospholipid peroxidation and ferroptosis. May play a role in mitochondrial stress signaling. Upon oxidative stress, associates with the lipid peroxidation end product 4-hydroxy-2-nonenal (HNE) forming a lipid adduct devoid of oxidoreductase activity, which then translocates from mitochondria into the nucleus triggering DNA damage and cell death. This chain is Ferroptosis suppressor protein 1 (aifm2), found in Xenopus tropicalis (Western clawed frog).